The primary structure comprises 629 residues: tRNA uridine 5-carboxymethylaminomethyl modification enzyme MnmG (629 aa).

13-18 contributes to the FAD binding site; that stretch reads GGGHAG. 273 to 287 contributes to the NAD(+) binding site; the sequence is GPRYCPSIEDKIHRF.

This sequence belongs to the MnmG family. In terms of assembly, homodimer. Heterotetramer of two MnmE and two MnmG subunits. FAD is required as a cofactor.

Its subcellular location is the cytoplasm. Its function is as follows. NAD-binding protein involved in the addition of a carboxymethylaminomethyl (cmnm) group at the wobble position (U34) of certain tRNAs, forming tRNA-cmnm(5)s(2)U34. This chain is tRNA uridine 5-carboxymethylaminomethyl modification enzyme MnmG, found in Shewanella baltica (strain OS223).